A 363-amino-acid chain; its full sequence is MNPVQQPAQQRSPASSLPHPKRAQEAPDMALYCDNFMYPQQSLHPSQRGPNFAIGEYTSPANPYLWLGGHGVNNAPNYSPSPAPYMPPSFGAPQRQFLPNSPAFGGTELSWMSAASQEELLKMVRPPYSYSALIAMAIQHASDRRLTLSQIYQYVAENFPFYKKSKAGWQNSIRHNLSLNDCFKKVPRDENDPGKGNYWTLDPNCEKMFDNGNFRRKRKPKSDANSAKIAKIGEDHLNPKGKESPPMITPSSPEEPSPTGHSKSPSPPAVTYTPCLTNFIGSMTAVDAATANRQGPLGLLNELSQRNISSLSSFISGSAVDQSAEHPDTSLFYNRSPYYSSFPTTAQKQPQFLQQPPLYQGRY.

Low complexity predominate over residues 1–18 (MNPVQQPAQQRSPASSLP). Disordered regions lie at residues 1–24 (MNPV…KRAQ), 210–269 (DNGN…SPPA), and 344–363 (TTAQ…QGRY). Positions 125 to 219 (RPPYSYSALI…DNGNFRRKRK (95 aa)) form a DNA-binding region, fork-head. The segment covering 231-243 (KIGEDHLNPKGKE) has biased composition (basic and acidic residues). Composition is skewed to low complexity over residues 244–258 (SPPM…EPSP) and 347–363 (QKQP…QGRY).

It is found in the nucleus. Transcription factor. Essential for ventral specification of the early cephalic (head) ectoderm during gastrulation, playing a role in the 'non-neural' versus 'neural' cell fate choice. Binds to DNA via the target sequence 5'-[AG]TAAA[CT]A-3', with 5'-ATAAACA-3' being the preferred binding site. This is Forkhead box protein I1 from Xenopus tropicalis (Western clawed frog).